Reading from the N-terminus, the 198-residue chain is Recombination protein RecR (198 aa).

The C4-type zinc finger occupies 57 to 72 (CEKCNTFTEAQICEVC). The 96-residue stretch at 80-175 (TLLCVVETPA…AVTRLARGVP (96 aa)) folds into the Toprim domain.

This sequence belongs to the RecR family.

In terms of biological role, may play a role in DNA repair. It seems to be involved in an RecBC-independent recombinational process of DNA repair. It may act with RecF and RecO. This chain is Recombination protein RecR, found in Burkholderia ambifaria (strain MC40-6).